The primary structure comprises 811 residues: Probable inorganic carbon transporter subunit DabA (811 aa).

Zn(2+)-binding residues include cysteine 336, aspartate 338, histidine 498, and cysteine 513.

It belongs to the inorganic carbon transporter (TC 9.A.2) DabA family. Forms a complex with DabB. The cofactor is Zn(2+).

The protein localises to the cell inner membrane. Part of an energy-coupled inorganic carbon pump. This chain is Probable inorganic carbon transporter subunit DabA, found in Azorhizobium caulinodans (strain ATCC 43989 / DSM 5975 / JCM 20966 / LMG 6465 / NBRC 14845 / NCIMB 13405 / ORS 571).